The chain runs to 173 residues: Large ribosomal subunit protein uL14mz (173 aa).

A mitochondrion-targeting transit peptide spans 1-61 (MAAAFASRLT…TVLKVVDNSG (61 aa)).

Belongs to the universal ribosomal protein uL14 family. As to quaternary structure, part of the mitochondrial 50S ribosomal subunit. In terms of tissue distribution, mostly expressed in leaves and inflorescences, including floral organs and meristems, and, to a lower extent, in pistils.

It localises to the mitochondrion. Its function is as follows. Binds to 23S rRNA in mitochondrion. This chain is Large ribosomal subunit protein uL14mz (HLP), found in Arabidopsis thaliana (Mouse-ear cress).